Consider the following 174-residue polypeptide: Sarcoplasmic calcium-binding protein (174 aa).

An N-acetylserine modification is found at serine 1. 4 consecutive EF-hand domains span residues 3–38 (LWVQ…FAKE), 55–90 (GVWD…NAKA), 91–126 (VVEG…LGLN), and 125–160 (LNPD…FFIN). Positions 16, 18, 20, and 27 each coordinate Ca(2+). Aspartate 104, asparagine 106, aspartate 108, methionine 110, glutamate 115, aspartate 138, asparagine 140, aspartate 142, and glutamate 149 together coordinate Ca(2+).

Functionally, like parvalbumins, SCPs seem to be more abundant in fast contracting muscles, but no functional relationship can be established from this distribution. In Perinereis vancaurica tetradentata (Sandworm), this protein is Sarcoplasmic calcium-binding protein.